The following is a 520-amino-acid chain: Anthranilate synthase component 1 (520 aa).

Residues serine 40 and 291 to 293 contribute to the L-tryptophan site; that span reads PYM. Residue 328–329 coordinates chorismate; the sequence is GT. Glutamate 361 contacts Mg(2+). Residues tyrosine 449, arginine 469, 483–485, and glycine 485 contribute to the chorismate site; that span reads GAG. Residue glutamate 498 coordinates Mg(2+).

The protein belongs to the anthranilate synthase component I family. Heterotetramer consisting of two non-identical subunits: a beta subunit (TrpG) and a large lpha subunit (TrpE). It depends on Mg(2+) as a cofactor.

The catalysed reaction is chorismate + L-glutamine = anthranilate + pyruvate + L-glutamate + H(+). The protein operates within amino-acid biosynthesis; L-tryptophan biosynthesis; L-tryptophan from chorismate: step 1/5. With respect to regulation, cooperatively feedback inhibited by tryptophan. In terms of biological role, part of a heterotetrameric complex that catalyzes the two-step biosynthesis of anthranilate, an intermediate in the biosynthesis of L-tryptophan. In the first step, the glutamine-binding beta subunit (TrpG) of anthranilate synthase (AS) provides the glutamine amidotransferase activity which generates ammonia as a substrate that, along with chorismate, is used in the second step, catalyzed by the large alpha subunit of AS (TrpE) to produce anthranilate. In the absence of TrpG, TrpE can synthesize anthranilate directly from chorismate and high concentrations of ammonia. The polypeptide is Anthranilate synthase component 1 (trpE) (Escherichia coli (strain K12)).